The following is a 133-amino-acid chain: Fatty acid-binding protein, heart (133 aa).

A2 is subject to N-acetylalanine. The residue at position 8 (T8) is a Phosphothreonine. Y20 carries the phosphotyrosine; by Tyr-kinases modification. S23 is modified (phosphoserine). A Phosphothreonine modification is found at T30. S83 carries the post-translational modification Phosphoserine. (9Z)-octadecenoate is bound at residue 127–129 (RTY). 127 to 129 (RTY) is a hexadecanoate binding site. 127 to 129 (RTY) is a binding site for octadecanoate.

In terms of tissue distribution, heart, but also skeletal muscle, kidney, brain and mammary gland.

The protein resides in the cytoplasm. Its function is as follows. FABPs are thought to play a role in the intracellular transport of long-chain fatty acids and their acyl-CoA esters. In Rattus norvegicus (Rat), this protein is Fatty acid-binding protein, heart (Fabp3).